We begin with the raw amino-acid sequence, 384 residues long: Deoxyguanosinetriphosphate triphosphohydrolase-like protein (384 aa).

The disordered stretch occupies residues 12–39 (ELASYASDPSKTRGRRHSEPPPENRTEF). Residues 28-39 (HSEPPPENRTEF) are compositionally biased toward basic and acidic residues. The 136-residue stretch at 73 to 208 (RLTHSLEVAQ…ANLADEVAYN (136 aa)) folds into the HD domain.

This sequence belongs to the dGTPase family. Type 2 subfamily.

The chain is Deoxyguanosinetriphosphate triphosphohydrolase-like protein from Bordetella parapertussis (strain 12822 / ATCC BAA-587 / NCTC 13253).